Consider the following 52-residue polypeptide: Dibenzothiophene metabolism operon protein NahQ/DoxH (52 aa).

Its pathway is aromatic compound metabolism; naphthalene degradation. In terms of biological role, may be involved in the conversion of 2-hydroxy-4-(2'-oxo-3,5-cyclohexadienyl)-buta-2,4-dienoate to cis-O-hydroxybenzylidenepyruvate. DoxH and DoxJ encode different enzymes that may have interchangeable functions. The polypeptide is Dibenzothiophene metabolism operon protein NahQ/DoxH (nahQ) (Pseudomonas putida (Arthrobacter siderocapsulatus)).